A 527-amino-acid polypeptide reads, in one-letter code: Probable serine/threonine-protein kinase DDB_G0271538 (527 aa).

Positions 1–10 are enriched in basic and acidic residues; it reads MNINFSKDDI. Residues 1-24 are disordered; sequence MNINFSKDDITGLPKSTKEEDEND. One can recognise a Protein kinase domain in the interval 33–294; sequence LFMDVEIGRG…KIVVEGLKVL (262 aa). ATP contacts are provided by residues 39 to 47 and K60; that span reads IGRGSFGQV. D156 serves as the catalytic Proton acceptor. Disordered stretches follow at residues 304–375, 422–452, and 485–527; these read VKGK…ISGS, FTPPPNSKSMMDLKQSSAVDEDEDEDEDDVP, and TALD…KKKL. Acidic residues predominate over residues 313–324; it reads DPDEDSFIDPND. Residues 325-359 are compositionally biased toward low complexity; it reads DSNNNNNSENNNNNNDNSNENNENNNENNNNSNEN. Positions 440–452 are enriched in acidic residues; sequence VDEDEDEDEDDVP. Basic residues predominate over residues 512–527; it reads PKKKPNNKNKKKKKKL.

The protein belongs to the protein kinase superfamily. TKL Ser/Thr protein kinase family.

The catalysed reaction is L-seryl-[protein] + ATP = O-phospho-L-seryl-[protein] + ADP + H(+). It carries out the reaction L-threonyl-[protein] + ATP = O-phospho-L-threonyl-[protein] + ADP + H(+). The sequence is that of Probable serine/threonine-protein kinase DDB_G0271538 from Dictyostelium discoideum (Social amoeba).